A 309-amino-acid chain; its full sequence is SUR7 family protein FMP45 (309 aa).

The Cytoplasmic portion of the chain corresponds to 1 to 5; it reads MIFKR. The chain crosses the membrane as a helical span at residues 6 to 26; the sequence is FVNLLVFLFLLGAGLLTFFLI. The Extracellular segment spans residues 27–116; the sequence is LSGGRESGTL…YYLSRVGWAM (90 aa). Asn73 carries N-linked (GlcNAc...) asparagine glycosylation. Residues 117–137 form a helical membrane-spanning segment; that stretch reads LLISLFFIVLALVPGFLATFL. The Cytoplasmic portion of the chain corresponds to 138 to 140; sequence PFK. A helical transmembrane segment spans residues 141 to 161; it reads AVPVLYCVLSWLAFFFIILAA. The Extracellular segment spans residues 162–188; the sequence is CLYTGCYVKARKTFRNSGRSARLGPKN. A helical membrane pass occupies residues 189 to 209; it reads FAFIWTSVFLMLVNAIWSTIF. At 210-309 the chain is on the cytoplasmic side; the sequence is SATHKAHSTY…GLAGPVTVRD (100 aa). 2 positions are modified to phosphoserine: Ser230 and Ser232. Thr235 carries the post-translational modification Phosphothreonine. A disordered region spans residues 253–309; sequence GPITAAPVVGQPQPTTTTTPAGNGKFFQKLKTRKQVPSAELEPAGDGGLAGPVTVRD. The span at 258-274 shows a compositional bias: low complexity; that stretch reads APVVGQPQPTTTTTPAG.

It belongs to the SUR7 family.

The protein resides in the cell membrane. Involved in sporulation and affects the sphingolipid composition of the plasma membrane. The sequence is that of SUR7 family protein FMP45 (FMP45) from Saccharomyces cerevisiae (strain ATCC 204508 / S288c) (Baker's yeast).